The sequence spans 740 residues: Ion-translocating oxidoreductase complex subunit C (740 aa).

2 consecutive 4Fe-4S ferredoxin-type domains span residues 369–397 (GEPQ…QQLY) and 407–436 (KATT…VQYF). Cys377, Cys380, Cys383, Cys387, Cys416, Cys419, Cys422, and Cys426 together coordinate [4Fe-4S] cluster. Disordered regions lie at residues 571–590 (LEQQ…RKAA) and 602–716 (KLEQ…DPRK). Low complexity-rich tracts occupy residues 573-583 (QQQANAEPEQQ) and 637-647 (QQQANAEPEQQ).

The protein belongs to the 4Fe4S bacterial-type ferredoxin family. RnfC subfamily. The complex is composed of six subunits: RsxA, RsxB, RsxC, RsxD, RsxE and RsxG. Requires [4Fe-4S] cluster as cofactor.

Its subcellular location is the cell inner membrane. In terms of biological role, part of a membrane-bound complex that couples electron transfer with translocation of ions across the membrane. Required to maintain the reduced state of SoxR. Probably transfers electron from NAD(P)H to SoxR. This Escherichia coli (strain K12) protein is Ion-translocating oxidoreductase complex subunit C.